A 259-amino-acid polypeptide reads, in one-letter code: uncharacterized protein (259 aa).

The protein belongs to the chlamydial CPn_0128/CT_035/TC_0305 family.

This is an uncharacterized protein from Chlamydia muridarum (strain MoPn / Nigg).